Reading from the N-terminus, the 346-residue chain is MLPFRFTYYTILDIFRFALRFIRPDPRSRVTDPVGDIVSFMHSFEEKYGRAHPVFYQGTYSQALSDAKRELRFLLVYLHGDDHQDSDEFCRNALCAPEVISLINSRMLFWACSTNKPEGYRVSQALRENTYPFLAMIMLKDRRMTVVGRLEGLIQPDDLINQLTFIMDANQTYLVSERLEREERNQTQVLRQQQDEAYLASLRADQEKERKKREERERKRRKEEEVQQQKLAEERRRQNLQEEKERKLECLPPEPSPDDPDSVKIIFKLPNDSRVERRFHFSQSLTVIHDFLFSLKESPEKFQIEANFPRRVLPCVPSEEWPNPPTLQEAGLSHTEVLFVQDLTDE.

Residue lysine 68 is modified to N6-acetyllysine. Positions 176–251 (SERLEREERN…EEKERKLECL (76 aa)) form a coiled coil. Residues 200 to 262 (ASLRADQEKE…PEPSPDDPDS (63 aa)) are disordered. Positions 204–249 (ADQEKERKKREERERKRRKEEEVQQQKLAEERRRQNLQEEKERKLE) are enriched in basic and acidic residues. The UBX domain maps to 258 to 340 (DDPDSVKIIF…GLSHTEVLFV (83 aa)).

Identified in a complex that contains SEL1L, OS9, FAF2/UBXD8, UBE2J1/UBC6E and AUP1. Interacts with YOD1. Interacts (via N-terminus) with UBQLN2 (via C-terminus). Interacts with PNPLA2 and UBAC2. Interacts with ZFAND2B; probably through VCP. Interacts with LMBR1L.

Its subcellular location is the cytoplasm. It localises to the lipid droplet. It is found in the endoplasmic reticulum. Its function is as follows. Plays an important role in endoplasmic reticulum-associated degradation (ERAD) that mediates ubiquitin-dependent degradation of misfolded endoplasmic reticulum proteins. By controlling the steady-state expression of the IGF1R receptor, indirectly regulates the insulin-like growth factor receptor signaling pathway. Involved in inhibition of lipid droplet degradation by binding to phospholipase PNPL2 and inhibiting its activity by promoting dissociation of PNPL2 from its endogenous activator, ABHD5 which inhibits the rate of triacylglycerol hydrolysis. Involved in stress granule disassembly: associates with ubiquitinated G3BP1 in response to heat shock, thereby promoting interaction between ubiquitinated G3BP1 and VCP, followed by G3BP1 extraction from stress granules and stress granule disassembly. The sequence is that of FAS-associated factor 2 (Faf2) from Rattus norvegicus (Rat).